The following is a 261-amino-acid chain: Cytochrome c oxidase subunit 3 (261 aa).

Over 1–15 the chain is Mitochondrial matrix; the sequence is MTHQTHAYHMVNPSP. A helical transmembrane segment spans residues 16–34; the sequence is WPLTGALSALLMTSGLIMW. At 35–40 the chain is on the mitochondrial intermembrane side; sequence FHFNST. A helical transmembrane segment spans residues 41-66; it reads ILLMLGLTTNMLTMYQWWRDVIREST. The Mitochondrial matrix portion of the chain corresponds to 67 to 72; the sequence is FQGHHT. Residues 73 to 105 form a helical membrane-spanning segment; it reads PNVQKGLRYGMILFIISEVLFFTGFFWAFYHSS. At 106–128 the chain is on the mitochondrial intermembrane side; the sequence is LAPTPELGGCWPPTGIHPLNPLE. A helical transmembrane segment spans residues 129 to 152; it reads VPLLNTSVLLASGVSITWAHHSLM. Residues 153-155 are Mitochondrial matrix-facing; the sequence is EGN. Residues 156–183 traverse the membrane as a helical segment; sequence RNHMLQALFITIALGVYFTLLQASEYYE. Over 184-190 the chain is Mitochondrial intermembrane; that stretch reads APFTISD. A helical membrane pass occupies residues 191–223; that stretch reads GVYGSTFFVATGFHGLHVIIGSTFLIVCFFRQL. The Mitochondrial matrix segment spans residues 224 to 232; sequence KFHFTSNHH. Residues 233–256 form a helical membrane-spanning segment; that stretch reads FGFEAAAWYWHFVDVVWLFLYVSI. Over 257-261 the chain is Mitochondrial intermembrane; it reads YWWGS.

This sequence belongs to the cytochrome c oxidase subunit 3 family. As to quaternary structure, component of the cytochrome c oxidase (complex IV, CIV), a multisubunit enzyme composed of 14 subunits. The complex is composed of a catalytic core of 3 subunits MT-CO1, MT-CO2 and MT-CO3, encoded in the mitochondrial DNA, and 11 supernumerary subunits COX4I, COX5A, COX5B, COX6A, COX6B, COX6C, COX7A, COX7B, COX7C, COX8 and NDUFA4, which are encoded in the nuclear genome. The complex exists as a monomer or a dimer and forms supercomplexes (SCs) in the inner mitochondrial membrane with NADH-ubiquinone oxidoreductase (complex I, CI) and ubiquinol-cytochrome c oxidoreductase (cytochrome b-c1 complex, complex III, CIII), resulting in different assemblies (supercomplex SCI(1)III(2)IV(1) and megacomplex MCI(2)III(2)IV(2)).

Its subcellular location is the mitochondrion inner membrane. The enzyme catalyses 4 Fe(II)-[cytochrome c] + O2 + 8 H(+)(in) = 4 Fe(III)-[cytochrome c] + 2 H2O + 4 H(+)(out). Its function is as follows. Component of the cytochrome c oxidase, the last enzyme in the mitochondrial electron transport chain which drives oxidative phosphorylation. The respiratory chain contains 3 multisubunit complexes succinate dehydrogenase (complex II, CII), ubiquinol-cytochrome c oxidoreductase (cytochrome b-c1 complex, complex III, CIII) and cytochrome c oxidase (complex IV, CIV), that cooperate to transfer electrons derived from NADH and succinate to molecular oxygen, creating an electrochemical gradient over the inner membrane that drives transmembrane transport and the ATP synthase. Cytochrome c oxidase is the component of the respiratory chain that catalyzes the reduction of oxygen to water. Electrons originating from reduced cytochrome c in the intermembrane space (IMS) are transferred via the dinuclear copper A center (CU(A)) of subunit 2 and heme A of subunit 1 to the active site in subunit 1, a binuclear center (BNC) formed by heme A3 and copper B (CU(B)). The BNC reduces molecular oxygen to 2 water molecules using 4 electrons from cytochrome c in the IMS and 4 protons from the mitochondrial matrix. This chain is Cytochrome c oxidase subunit 3 (MT-CO3), found in Eudorcas thomsonii (Thomson's gazelle).